Consider the following 295-residue polypeptide: MSSFRPVFRSRWLPYLLVAPQLVITVIFFIWPAGEALWYSLQSVDPFGFSSQFVGLENFVALFHDSYYLDAFWTTIKFSALVTFSGLLVSLFFAALVDYVVRGSRFYQTLMLLPYAVAPAVAAVLWIFLFNPGRGLITHFLGEFGYDWNHAQNSGQAMFLVVFASVWKQISYNFLFFFAALQSIPRSLVEAAAIDGAGPIRRFFRLSLPLIAPVSFFLLVVNLVYAFFDTFPVIDAATAGGPVQATTTLIYKIYREGFTGLDLSASAAQSVVLMFLVIILTVVQFRYVESKVRYQ.

Residues 1–11 lie on the Cytoplasmic side of the membrane; the sequence is MSSFRPVFRSR. A helical membrane pass occupies residues 12-32; sequence WLPYLLVAPQLVITVIFFIWP. Topologically, residues 33–80 are periplasmic; the sequence is AGEALWYSLQSVDPFGFSSQFVGLENFVALFHDSYYLDAFWTTIKFSA. An ABC transmembrane type-1 domain is found at 76–284; sequence IKFSALVTFS…FLVIILTVVQ (209 aa). The chain crosses the membrane as a helical span at residues 81-101; it reads LVTFSGLLVSLFFAALVDYVV. Topologically, residues 102–109 are cytoplasmic; sequence RGSRFYQT. Residues 110 to 130 form a helical membrane-spanning segment; that stretch reads LMLLPYAVAPAVAAVLWIFLF. Residues 131–157 lie on the Periplasmic side of the membrane; sequence NPGRGLITHFLGEFGYDWNHAQNSGQA. The chain crosses the membrane as a helical span at residues 158–178; it reads MFLVVFASVWKQISYNFLFFF. Residues 179–207 lie on the Cytoplasmic side of the membrane; it reads AALQSIPRSLVEAAAIDGAGPIRRFFRLS. The helical transmembrane segment at 208–228 threads the bilayer; sequence LPLIAPVSFFLLVVNLVYAFF. Over 229–262 the chain is Periplasmic; that stretch reads DTFPVIDAATAGGPVQATTTLIYKIYREGFTGLD. The helical transmembrane segment at 263–283 threads the bilayer; it reads LSASAAQSVVLMFLVIILTVV. At 284–295 the chain is on the cytoplasmic side; it reads QFRYVESKVRYQ.

The protein belongs to the binding-protein-dependent transport system permease family. UgpAE subfamily. In terms of assembly, the complex is composed of two ATP-binding proteins (UgpC), two transmembrane proteins (UgpA and UgpE) and a solute-binding protein (UgpB).

It localises to the cell inner membrane. Functionally, part of the ABC transporter complex UgpBAEC involved in sn-glycerol-3-phosphate (G3P) import. Probably responsible for the translocation of the substrate across the membrane. The sequence is that of sn-glycerol-3-phosphate transport system permease protein UgpA (ugpA) from Salmonella choleraesuis (strain SC-B67).